A 332-amino-acid polypeptide reads, in one-letter code: MLAEYLVHVGRVNVFLDPETKDIPKCVADLKFPLPLTLSRSTPINPIIRSDTIQLVISCPPVTYSDEIQVPWKAIDLNKDDAVKSTIKCKQCQSFLTSISSWKDLPSANWMEMLDCWSCHTDYPTVLSKRGGPSMFQPTDDCAYLGTSYVLIRLQSLEGKVAYGPNFKLHCSFCNAELGLPNNKDSSNGVRLDKSSICIDDQKIHPSFIVASEILTLRDMYATHKFVIVDGERSIWTWCFVPHLPISFQKSPFSSIEFANSPISTIKLLYQLEVPPDFTKSSEDWMDIPVSSHAFDEISHVLEKGNLSFPVSAQKFGPWKVGLLPKFHKQMI.

This is an uncharacterized protein from Schizosaccharomyces pombe (strain 972 / ATCC 24843) (Fission yeast).